Consider the following 402-residue polypeptide: Putative FBD-associated F-box protein At5g56690 (402 aa).

Positions M1–D47 constitute an F-box domain. One can recognise an FBD domain in the interval S349 to H401.

This is Putative FBD-associated F-box protein At5g56690 from Arabidopsis thaliana (Mouse-ear cress).